A 310-amino-acid chain; its full sequence is Homoserine kinase (310 aa).

An ATP-binding site is contributed by 91–101; that stretch reads PIGSGLGSSAC.

The protein belongs to the GHMP kinase family. Homoserine kinase subfamily.

The protein resides in the cytoplasm. The catalysed reaction is L-homoserine + ATP = O-phospho-L-homoserine + ADP + H(+). Its pathway is amino-acid biosynthesis; L-threonine biosynthesis; L-threonine from L-aspartate: step 4/5. In terms of biological role, catalyzes the ATP-dependent phosphorylation of L-homoserine to L-homoserine phosphate. The protein is Homoserine kinase of Sodalis glossinidius (strain morsitans).